A 187-amino-acid polypeptide reads, in one-letter code: Nodulin-related protein 1 (187 aa).

The residue at position 1 (methionine 1) is an N-acetylmethionine. Disordered stretches follow at residues 1-66 (MDFF…ATNA) and 132-176 (YETS…HGFG). Residues 7 to 48 (QVKKKFSDKKPESSDPEPNHNKNKPGHTEPTTHKPGHGEPTT) are compositionally biased toward basic and acidic residues. The segment covering 142–158 (GGTGSHGNVGGHGGGAG) has biased composition (gly residues).

Interacts with RPS2. Expressed in roots, leaves, flowers and siliques.

Prevents accumulation of abscisic acid (ABA) after heat treatment, thus reducing thermotolerance. May be a negative regulator of the ABA signaling/synthesis pathway. Required for defense responses against avirulent bacteria such as P.syringae pv. tomato DC3000 (avrRpt2). The protein is Nodulin-related protein 1 of Arabidopsis thaliana (Mouse-ear cress).